A 506-amino-acid chain; its full sequence is Histidine ammonia-lyase (506 aa).

Positions 144-146 (ASG) form a cross-link, 5-imidazolinone (Ala-Gly). 2,3-didehydroalanine (Ser) is present on serine 145.

Belongs to the PAL/histidase family. Post-translationally, contains an active site 4-methylidene-imidazol-5-one (MIO), which is formed autocatalytically by cyclization and dehydration of residues Ala-Ser-Gly.

Its subcellular location is the cytoplasm. The enzyme catalyses L-histidine = trans-urocanate + NH4(+). It participates in amino-acid degradation; L-histidine degradation into L-glutamate; N-formimidoyl-L-glutamate from L-histidine: step 1/3. This is Histidine ammonia-lyase from Legionella pneumophila (strain Paris).